The sequence spans 225 residues: PKHD-type hydroxylase YbiX (225 aa).

A Fe2OG dioxygenase domain is found at 78–177; that stretch reads TLSTPLFNRY…RVASFMWIQS (100 aa). Fe cation-binding residues include histidine 96, aspartate 98, and histidine 158. Arginine 168 contacts 2-oxoglutarate.

It depends on Fe(2+) as a cofactor. The cofactor is L-ascorbate.

The polypeptide is PKHD-type hydroxylase YbiX (Escherichia coli (strain 55989 / EAEC)).